The following is a 62-amino-acid chain: MTIIFQFALVALVLVSFVLVVGVPVAYATPQNWVESKKLLWLGSGVWIALVLLVGLLNFFVV.

2 helical membrane-spanning segments follow: residues 8 to 28 (ALVALVLVSFVLVVGVPVAYA) and 41 to 61 (WLGSGVWIALVLLVGLLNFFV).

This sequence belongs to the PsbZ family. In terms of assembly, PSII is composed of 1 copy each of membrane proteins PsbA, PsbB, PsbC, PsbD, PsbE, PsbF, PsbH, PsbI, PsbJ, PsbK, PsbL, PsbM, PsbT, PsbX, PsbY, PsbZ, Psb30/Ycf12, peripheral proteins PsbO, CyanoQ (PsbQ), PsbU, PsbV and a large number of cofactors. It forms dimeric complexes.

The protein resides in the cellular thylakoid membrane. Functionally, may control the interaction of photosystem II (PSII) cores with the light-harvesting antenna, regulates electron flow through the 2 photosystem reaction centers. PSII is a light-driven water plastoquinone oxidoreductase, using light energy to abstract electrons from H(2)O, generating a proton gradient subsequently used for ATP formation. The protein is Photosystem II reaction center protein Z of Nostoc sp. (strain PCC 7120 / SAG 25.82 / UTEX 2576).